A 69-amino-acid chain; its full sequence is Probable rubredoxin HupI (69 aa).

Residues 16 to 67 (VTRLECGICWTVYDPADGDDVAQIAPGTPFAALPEEWHCPNCDAPKSKFMAI) enclose the Rubredoxin-like domain. The Fe cation site is built by C21, C24, C54, and C57.

The protein belongs to the rubredoxin family. Fe(3+) is required as a cofactor.

Functionally, could be an electron transport intermediate in hydrogen oxidation. The sequence is that of Probable rubredoxin HupI (hupI) from Bradyrhizobium diazoefficiens (strain JCM 10833 / BCRC 13528 / IAM 13628 / NBRC 14792 / USDA 110).